Reading from the N-terminus, the 206-residue chain is N-(5'-phosphoribosyl)anthranilate isomerase (206 aa).

The protein belongs to the TrpF family.

It catalyses the reaction N-(5-phospho-beta-D-ribosyl)anthranilate = 1-(2-carboxyphenylamino)-1-deoxy-D-ribulose 5-phosphate. It functions in the pathway amino-acid biosynthesis; L-tryptophan biosynthesis; L-tryptophan from chorismate: step 3/5. In Pseudomonas syringae pv. tomato (strain ATCC BAA-871 / DC3000), this protein is N-(5'-phosphoribosyl)anthranilate isomerase.